Here is a 65-residue protein sequence, read N- to C-terminus: MAIVPKRKTSKQRKHKRQSHSALKLPNLVSCSNCANKKLPHHICQFCGFYKNRKIISFKAVNDKN.

Residues 1–19 (MAIVPKRKTSKQRKHKRQS) show a composition bias toward basic residues. Residues 1 to 21 (MAIVPKRKTSKQRKHKRQSHS) form a disordered region.

This sequence belongs to the bacterial ribosomal protein bL32 family.

The polypeptide is Large ribosomal subunit protein bL32 (Mesomycoplasma hyopneumoniae (strain 7448) (Mycoplasma hyopneumoniae)).